Here is a 102-residue protein sequence, read N- to C-terminus: Large ribosomal subunit protein bL28 (102 aa).

This sequence belongs to the bacterial ribosomal protein bL28 family.

The chain is Large ribosomal subunit protein bL28 from Bradyrhizobium diazoefficiens (strain JCM 10833 / BCRC 13528 / IAM 13628 / NBRC 14792 / USDA 110).